Consider the following 493-residue polypeptide: Glutamyl-tRNA(Gln) amidotransferase subunit A (493 aa).

Catalysis depends on charge relay system residues lysine 78 and serine 158. Catalysis depends on serine 182, which acts as the Acyl-ester intermediate.

This sequence belongs to the amidase family. GatA subfamily. As to quaternary structure, heterotrimer of A, B and C subunits.

The catalysed reaction is L-glutamyl-tRNA(Gln) + L-glutamine + ATP + H2O = L-glutaminyl-tRNA(Gln) + L-glutamate + ADP + phosphate + H(+). Its function is as follows. Allows the formation of correctly charged Gln-tRNA(Gln) through the transamidation of misacylated Glu-tRNA(Gln) in organisms which lack glutaminyl-tRNA synthetase. The reaction takes place in the presence of glutamine and ATP through an activated gamma-phospho-Glu-tRNA(Gln). The chain is Glutamyl-tRNA(Gln) amidotransferase subunit A from Rickettsia conorii (strain ATCC VR-613 / Malish 7).